A 230-amino-acid polypeptide reads, in one-letter code: Ureidoacrylate amidohydrolase RutB (230 aa).

Asp-24 serves as the catalytic Proton acceptor. Lys-133 is an active-site residue. Cys-166 acts as the Nucleophile in catalysis.

This sequence belongs to the isochorismatase family. RutB subfamily.

It carries out the reaction (Z)-3-ureidoacrylate + H2O + H(+) = (Z)-3-aminoacrylate + NH4(+) + CO2. It catalyses the reaction (Z)-3-ureidoacrylate + H2O = (Z)-3-aminoacrylate + carbamate + H(+). The catalysed reaction is (Z)-2-methylureidoacrylate + H2O + H(+) = (Z)-2-methylaminoacrylate + NH4(+) + CO2. In terms of biological role, hydrolyzes ureidoacrylate to form aminoacrylate and carbamate. The carbamate hydrolyzes spontaneously, thereby releasing one of the nitrogen atoms of the pyrimidine ring as ammonia and one of its carbon atoms as CO2. The chain is Ureidoacrylate amidohydrolase RutB from Escherichia coli O44:H18 (strain 042 / EAEC).